The sequence spans 188 residues: MKISANSIRTGNILVYNNDLWVVSKTPEHTQPGKGGAYVQVEMKNLKTGTKRNERFSSADYLDKAELEQKDYQFLYFEGDDLVLMDTKHFDQINISKEMLEEKLSFLTENIIVKVEFYNDKPLNIELPPTVILEISETDPVIKGATATASYKPAILENGIKVKVPQYLEIGEKIVVKTDDMTYVERAK.

Belongs to the elongation factor P family.

The protein localises to the cytoplasm. The protein operates within protein biosynthesis; polypeptide chain elongation. In terms of biological role, involved in peptide bond synthesis. Stimulates efficient translation and peptide-bond synthesis on native or reconstituted 70S ribosomes in vitro. Probably functions indirectly by altering the affinity of the ribosome for aminoacyl-tRNA, thus increasing their reactivity as acceptors for peptidyl transferase. The polypeptide is Elongation factor P (Rickettsia peacockii (strain Rustic)).